Reading from the N-terminus, the 637-residue chain is Glutamate--cysteine ligase catalytic subunit (637 aa).

Met1 is modified (N-acetylmethionine). Ser5 and Ser8 each carry phosphoserine.

Belongs to the glutamate--cysteine ligase type 3 family. In terms of assembly, heterodimer of a catalytic heavy chain and a regulatory light chain.

The enzyme catalyses L-cysteine + L-glutamate + ATP = gamma-L-glutamyl-L-cysteine + ADP + phosphate + H(+). It catalyses the reaction (2S)-2-aminobutanoate + L-glutamate + ATP = gamma-L-glutamyl-(2S)-2-aminobutanoate + ADP + phosphate + H(+). It functions in the pathway sulfur metabolism; glutathione biosynthesis; glutathione from L-cysteine and L-glutamate: step 1/2. Feedback inhibition by glutathione. In terms of biological role, catalyzes the ATP-dependent ligation of L-glutamate and L-cysteine and participates in the first and rate-limiting step in glutathione biosynthesis. The sequence is that of Glutamate--cysteine ligase catalytic subunit from Mus musculus (Mouse).